Consider the following 349-residue polypeptide: Glycerol-3-phosphate dehydrogenase [NAD(P)+] (349 aa).

Residues Ser-12, Trp-13, and Lys-107 each coordinate NADPH. Sn-glycerol 3-phosphate contacts are provided by Lys-107, Gly-138, and Ser-140. Position 142 (Ala-142) interacts with NADPH. Sn-glycerol 3-phosphate-binding residues include Lys-193, Asp-246, Ser-256, Arg-257, and Asn-258. Catalysis depends on Lys-193, which acts as the Proton acceptor. Arg-257 is an NADPH binding site. The NADPH site is built by Val-281 and Glu-283.

The protein belongs to the NAD-dependent glycerol-3-phosphate dehydrogenase family.

The protein resides in the cytoplasm. It carries out the reaction sn-glycerol 3-phosphate + NAD(+) = dihydroxyacetone phosphate + NADH + H(+). The catalysed reaction is sn-glycerol 3-phosphate + NADP(+) = dihydroxyacetone phosphate + NADPH + H(+). Its pathway is membrane lipid metabolism; glycerophospholipid metabolism. Catalyzes the reduction of the glycolytic intermediate dihydroxyacetone phosphate (DHAP) to sn-glycerol 3-phosphate (G3P), the key precursor for phospholipid synthesis. In Pelotomaculum thermopropionicum (strain DSM 13744 / JCM 10971 / SI), this protein is Glycerol-3-phosphate dehydrogenase [NAD(P)+].